A 131-amino-acid chain; its full sequence is Phosphoribosyl-AMP cyclohydrolase (131 aa).

A Mg(2+)-binding site is contributed by D78. C79 is a Zn(2+) binding site. D80 and D82 together coordinate Mg(2+). The Zn(2+) site is built by C96 and C103.

This sequence belongs to the PRA-CH family. As to quaternary structure, homodimer. It depends on Mg(2+) as a cofactor. Zn(2+) serves as cofactor.

The protein localises to the cytoplasm. It carries out the reaction 1-(5-phospho-beta-D-ribosyl)-5'-AMP + H2O = 1-(5-phospho-beta-D-ribosyl)-5-[(5-phospho-beta-D-ribosylamino)methylideneamino]imidazole-4-carboxamide. Its pathway is amino-acid biosynthesis; L-histidine biosynthesis; L-histidine from 5-phospho-alpha-D-ribose 1-diphosphate: step 3/9. Its function is as follows. Catalyzes the hydrolysis of the adenine ring of phosphoribosyl-AMP. The chain is Phosphoribosyl-AMP cyclohydrolase from Neisseria meningitidis serogroup C / serotype 2a (strain ATCC 700532 / DSM 15464 / FAM18).